The primary structure comprises 100 residues: NADH-quinone oxidoreductase subunit K (100 aa).

3 helical membrane-spanning segments follow: residues 3 to 23, 29 to 49, and 60 to 80; these read LNAY…GIFL, ISIM…FVAF, and IFTF…LAIL.

This sequence belongs to the complex I subunit 4L family. NDH-1 is composed of 14 different subunits. Subunits NuoA, H, J, K, L, M, N constitute the membrane sector of the complex.

It localises to the cell inner membrane. It catalyses the reaction a quinone + NADH + 5 H(+)(in) = a quinol + NAD(+) + 4 H(+)(out). Functionally, NDH-1 shuttles electrons from NADH, via FMN and iron-sulfur (Fe-S) centers, to quinones in the respiratory chain. The immediate electron acceptor for the enzyme in this species is believed to be ubiquinone. Couples the redox reaction to proton translocation (for every two electrons transferred, four hydrogen ions are translocated across the cytoplasmic membrane), and thus conserves the redox energy in a proton gradient. The sequence is that of NADH-quinone oxidoreductase subunit K from Magnetococcus marinus (strain ATCC BAA-1437 / JCM 17883 / MC-1).